The sequence spans 416 residues: 4-hydroxy-3-methylbut-2-en-1-yl diphosphate synthase (flavodoxin) (416 aa).

[4Fe-4S] cluster is bound by residues C304, C307, C350, and E357.

This sequence belongs to the IspG family. [4Fe-4S] cluster is required as a cofactor.

The catalysed reaction is (2E)-4-hydroxy-3-methylbut-2-enyl diphosphate + oxidized [flavodoxin] + H2O + 2 H(+) = 2-C-methyl-D-erythritol 2,4-cyclic diphosphate + reduced [flavodoxin]. It participates in isoprenoid biosynthesis; isopentenyl diphosphate biosynthesis via DXP pathway; isopentenyl diphosphate from 1-deoxy-D-xylulose 5-phosphate: step 5/6. In terms of biological role, converts 2C-methyl-D-erythritol 2,4-cyclodiphosphate (ME-2,4cPP) into 1-hydroxy-2-methyl-2-(E)-butenyl 4-diphosphate. The sequence is that of 4-hydroxy-3-methylbut-2-en-1-yl diphosphate synthase (flavodoxin) from Agrobacterium fabrum (strain C58 / ATCC 33970) (Agrobacterium tumefaciens (strain C58)).